Consider the following 23-residue polypeptide: Aurein-4.1 (23 aa).

Belongs to the frog skin active peptide (FSAP) family. Aurein subfamily. Expressed by the skin dorsal glands.

The protein localises to the secreted. Its function is as follows. Has no antimicrobial or anticancer activity. This is Aurein-4.1 from Ranoidea aurea (Green and golden bell frog).